Reading from the N-terminus, the 177-residue chain is R-phycoerythrin beta chain (177 aa).

Residues C50 and C61 each coordinate phycourobilin. Position 72 is an N4-methylasparagine (N72). Residues C82 and C158 each coordinate (2R,3E)-phycoerythrobilin.

Belongs to the phycobiliprotein family. Heterodimer of an alpha and a beta chain. In terms of processing, contains two covalently linked phycoerythrobilin chromophores and one covalently linked phycourobilin chromophore.

The protein resides in the plastid. Its subcellular location is the chloroplast thylakoid membrane. Functionally, light-harvesting photosynthetic bile pigment-protein from the phycobiliprotein complex. In Pyropia yezoensis (Susabi-nori), this protein is R-phycoerythrin beta chain (cpeB).